A 292-amino-acid polypeptide reads, in one-letter code: MSAFASENLTSALLVVGTAIFAVLVGAKFLGGSGKPRKVLNPTEFQNFVLKEKNEISHNVAIYRFALPRPTDILGLPIGQHISLAATIEGQPKEVVRSYTPISSDNEAGYFDLLVKAYPQGNISKYLTTLKIGDNMKVRGPKGAMVYTPNMCRHIGMIAGGTGITPMLQIIKAIIRNRPRNGGNDTTQVDLIFANVNPEDILLKEELEQLVKEDDGFRVYYVLNNPPEGWTGGVGFVTPDMIKERLPAPAQDIKIMLCGPPPMISAMKKATESLGYTKARPVSKLEDQVFCF.

A helical transmembrane segment spans residues 12–32 (ALLVVGTAIFAVLVGAKFLGG). The FAD-binding FR-type domain maps to 43–148 (TEFQNFVLKE…RGPKGAMVYT (106 aa)). FAD contacts are provided by residues 128 to 143 (TTLK…GPKG) and 154 to 191 (HIGM…QVDL).

The protein belongs to the flavoprotein pyridine nucleotide cytochrome reductase family. As to quaternary structure, monomer. Component of the 2-(3-amino-3-carboxypropyl)histidine synthase complex composed of dph1, dph2, dph3 and a NADH-dependent reductase, predominantly cbr1. FAD serves as cofactor.

Its subcellular location is the mitochondrion outer membrane. The catalysed reaction is 2 Fe(III)-[cytochrome b5] + NADH = 2 Fe(II)-[cytochrome b5] + NAD(+) + H(+). The enzyme catalyses 2 Fe(3+)-[Dph3] + NADH = 2 Fe(2+)-[Dph3] + NAD(+) + H(+). The protein operates within protein modification; peptidyl-diphthamide biosynthesis. Functionally, NADH-dependent reductase for dph3 and cytochrome b5. Required for the first step of diphthamide biosynthesis, a post-translational modification of histidine which occurs in elongation factor 2. Dph1 and dph2 transfer a 3-amino-3-carboxypropyl (ACP) group from S-adenosyl-L-methionine (SAM) to a histidine residue, the reaction is assisted by a reduction system comprising dph3 and a NADH-dependent reductase, predominantly cbr1. By reducing dph3, also involved in the formation of the tRNA wobble base modification mcm5s 2U (5-methoxycarbonylmethyl-2-thiouridine), mediated by the elongator complex. The cytochrome b5/NADH cytochrome b5 reductase electron transfer system supports the catalytic activity of several sterol biosynthetic enzymes. This chain is NADH-cytochrome b5 reductase 1 (cbr1), found in Aspergillus oryzae (strain ATCC 42149 / RIB 40) (Yellow koji mold).